A 364-amino-acid chain; its full sequence is BOLA class I histocompatibility antigen, alpha chain BL3-7 (364 aa).

The first 27 residues, 1-27 (MRVMRVMRPRTLLLLLSGVLVLTETLA), serve as a signal peptide directing secretion. The interval 28–117 (GSHSLRYFYT…LRGYYNQSET (90 aa)) is alpha-1. Over 28–310 (GSHSLRYFYT…WEPPQTSFLI (283 aa)) the chain is Extracellular. N-linked (GlcNAc...) asparagine glycosylation is present at asparagine 113. Residues 118–209 (GSHNIQAMYG…ENGKDTLLRA (92 aa)) form an alpha-2 region. 2 disulfides stabilise this stretch: cysteine 128-cysteine 191 and cysteine 230-cysteine 286. Residues 210–301 (DPPKAHVTHH…GLQEPLTLRW (92 aa)) are alpha-3. In terms of domain architecture, Ig-like C1-type spans 212–298 (PKAHVTHHSI…QHEGLQEPLT (87 aa)). A connecting peptide region spans residues 302–310 (EPPQTSFLI). Residues 311–331 (MGIIVGLVLLVVALVAGAVIW) traverse the membrane as a helical segment. Residues 332 to 364 (RKKRSGEKGRIYTQAASSDSAQGSDVSLTVPKV) lie on the Cytoplasmic side of the membrane. Residues serine 355 and serine 358 each carry the phosphoserine modification.

It belongs to the MHC class I family. As to quaternary structure, heterodimer of an alpha chain and a beta chain (beta-2-microglobulin).

The protein resides in the membrane. In terms of biological role, involved in the presentation of foreign antigens to the immune system. This Bos taurus (Bovine) protein is BOLA class I histocompatibility antigen, alpha chain BL3-7.